Consider the following 350-residue polypeptide: Uroporphyrinogen decarboxylase (350 aa).

Substrate-binding positions include R28–R32, F47, D78, Y155, S210, and H325.

This sequence belongs to the uroporphyrinogen decarboxylase family. As to quaternary structure, homodimer.

The protein localises to the cytoplasm. It carries out the reaction uroporphyrinogen III + 4 H(+) = coproporphyrinogen III + 4 CO2. It participates in porphyrin-containing compound metabolism; protoporphyrin-IX biosynthesis; coproporphyrinogen-III from 5-aminolevulinate: step 4/4. Catalyzes the decarboxylation of four acetate groups of uroporphyrinogen-III to yield coproporphyrinogen-III. This Nostoc sp. (strain PCC 7120 / SAG 25.82 / UTEX 2576) protein is Uroporphyrinogen decarboxylase.